Consider the following 236-residue polypeptide: Transmembrane protein 70 homolog, mitochondrial (236 aa).

Residues 1–64 (MLGLRAMLPK…WLSVKSTKTE (64 aa)) constitute a mitochondrion transit peptide. The next 2 helical transmembrane spans lie at 83 to 103 (MVKFFSLSTSLAGLAAQPILL) and 116 to 136 (VFLCTVGGFFTFVTPLLLHFI).

Belongs to the TMEM70 family. In terms of assembly, associates with mitochondrial complex I assembly intermediates during its biogenesis.

It is found in the mitochondrion membrane. Functionally, scaffold protein that participates in the c-ring assembly of mitochondrial ATP synthase (F(1)F(0) ATP synthase or complex V). Also binds the mitochondrial proton-transporting ATP synthase complex I and may play a role in the stability of its membrane-bound subassemblies. The sequence is that of Transmembrane protein 70 homolog, mitochondrial from Drosophila melanogaster (Fruit fly).